A 621-amino-acid polypeptide reads, in one-letter code: Complex I assembly factor ACAD9, mitochondrial (621 aa).

Residues methionine 1–arginine 37 constitute a mitochondrion transit peptide. The residue at position 41 (lysine 41) is an N6-acetyllysine. N6-succinyllysine is present on lysine 92. Glutamate 426 acts as the Proton acceptor in catalysis. At threonine 478 the chain carries Phosphothreonine. Residue lysine 521 is modified to N6-acetyllysine; alternate. Lysine 521 bears the N6-succinyllysine; alternate mark.

Belongs to the acyl-CoA dehydrogenase family. As to quaternary structure, homodimer. Interacts with NDUFAF1 and ECSIT. Part of the mitochondrial complex I assembly/MCIA complex that comprises at least the core subunits TMEM126B, NDUFAF1, ECSIT and ACAD9 and complement subunits such as COA1 and TMEM186. Interacts with TMEM70 and TMEM242. Requires FAD as cofactor. In terms of tissue distribution, ubiquitously expressed in most normal human tissues and cancer cell lines with high level of expression in heart, skeletal muscles, brain, kidney and liver. In the cerebellum uniquely expressed in the granular layer (at protein level).

The protein resides in the mitochondrion inner membrane. It catalyses the reaction eicosanoyl-CoA + oxidized [electron-transfer flavoprotein] + H(+) = (2E)-eicosenoyl-CoA + reduced [electron-transfer flavoprotein]. The enzyme catalyses octadecanoyl-CoA + oxidized [electron-transfer flavoprotein] + H(+) = (2E)-octadecenoyl-CoA + reduced [electron-transfer flavoprotein]. The catalysed reaction is oxidized [electron-transfer flavoprotein] + hexadecanoyl-CoA + H(+) = (2E)-hexadecenoyl-CoA + reduced [electron-transfer flavoprotein]. It carries out the reaction decanoyl-CoA + oxidized [electron-transfer flavoprotein] + H(+) = (2E)-decenoyl-CoA + reduced [electron-transfer flavoprotein]. It catalyses the reaction nonanoyl-CoA + oxidized [electron-transfer flavoprotein] + H(+) = (2E)-nonenoyl-CoA + reduced [electron-transfer flavoprotein]. The enzyme catalyses pentadecanoyl-CoA + oxidized [electron-transfer flavoprotein] + H(+) = (2E)-pentadecenoyl-CoA + reduced [electron-transfer flavoprotein]. The catalysed reaction is undecanoyl-CoA + oxidized [electron-transfer flavoprotein] + H(+) = trans-2-undecenoyl-CoA + reduced [electron-transfer flavoprotein]. It carries out the reaction (9Z)-hexadecenoyl-CoA + oxidized [electron-transfer flavoprotein] + H(+) = (2E,9Z)-hexadecadienoyl-CoA + reduced [electron-transfer flavoprotein]. It catalyses the reaction heptadecanoyl-CoA + oxidized [electron-transfer flavoprotein] + H(+) = trans-2-heptadecenoyl-CoA + reduced [electron-transfer flavoprotein]. The enzyme catalyses (9E)-octadecenoyl-CoA + oxidized [electron-transfer flavoprotein] + H(+) = (2E,9E)-octadecadienoyl-CoA + reduced [electron-transfer flavoprotein]. The catalysed reaction is oxidized [electron-transfer flavoprotein] + (9Z)-octadecenoyl-CoA + H(+) = (2E,9Z)-octadecadienoyl-CoA + reduced [electron-transfer flavoprotein]. It carries out the reaction (9Z,12Z)-octadecadienoyl-CoA + oxidized [electron-transfer flavoprotein] + H(+) = (2E,9Z,12Z)-octadecatrienoyl-CoA + reduced [electron-transfer flavoprotein]. It catalyses the reaction (4Z,7Z,10Z,13Z,16Z,19Z)-docosahexaenoyl-CoA + oxidized [electron-transfer flavoprotein] + H(+) = (2E,4Z,7Z,10Z,13Z,16Z,19Z)-docosaheptaenoyl-CoA + reduced [electron-transfer flavoprotein]. The enzyme catalyses tetradecanoyl-CoA + oxidized [electron-transfer flavoprotein] + H(+) = (2E)-tetradecenoyl-CoA + reduced [electron-transfer flavoprotein]. Its function is as follows. As part of the MCIA complex, primarily participates in the assembly of the mitochondrial complex I and therefore plays a role in oxidative phosphorylation. This moonlighting protein also has a dehydrogenase activity toward a broad range of substrates with greater specificity for long-chain unsaturated acyl-CoAs. However, in vivo, it does not seem to play a primary role in fatty acid oxidation. In addition, the function in complex I assembly is independent of the dehydrogenase activity of the protein. The sequence is that of Complex I assembly factor ACAD9, mitochondrial from Homo sapiens (Human).